A 488-amino-acid polypeptide reads, in one-letter code: GTPase Der (488 aa).

2 EngA-type G domains span residues 3 to 166 and 200 to 373; these read PVVA…AEAM and IKLA…DSAT. GTP contacts are provided by residues 9 to 16, 56 to 60, 118 to 121, 206 to 213, 253 to 257, and 318 to 321; these read GRPNVGKS, DTGGI, NKVD, GKPNVGKS, DTAGV, and NKWD. The 85-residue stretch at 374 to 458 folds into the KH-like domain; that stretch reads RRVSTSMLTR…PIQLRFHEGD (85 aa).

It belongs to the TRAFAC class TrmE-Era-EngA-EngB-Septin-like GTPase superfamily. EngA (Der) GTPase family. In terms of assembly, associates with the 50S ribosomal subunit.

GTPase that plays an essential role in the late steps of ribosome biogenesis. In Shewanella amazonensis (strain ATCC BAA-1098 / SB2B), this protein is GTPase Der.